A 455-amino-acid polypeptide reads, in one-letter code: MIEFLALITLISRANALMRPDGVGRLPALGWSSWNAHECDINATVILTAAAQVVKLGLKDLGYEYINIDDCWSIKTHRDPTTNRMIPDADRFPDGIASVASQIHELGLKVGIYSSAGETTCAGYPASLGYEDIDAETFAEWEIDYLKYDDCGVPDNWKDPYTFCVPDTANNAGPFPNGTCPSLPNPAPANYNWSTSPSAERFRRMLDALNTQDRTILYSLCNWGNAAVNTWGAEIGNSWRMSGDISPGRGEVGPDRTRIAVWERIAEITNEMSFLVREYAEFWGWPDADMLEVGNGEGGMTVAENRAHFALWAAMRSPLLIGTKLDTIRQEHLKILKNPTLLTFHQDPIINRPAYPYKWGYNADYTFDAAHPAEYWSGPSPALEGTLVVMLNSENVTSTRMAVWSEVPELQNQDQGDAFEVMDGWTGEDLGCIKEKYEVELDAHDAAVLVVGNAC.

Residues 1-16 form the signal peptide; it reads MIEFLALITLISRANA. Cystine bridges form between Cys-39–Cys-71 and Cys-121–Cys-151. Asn-42 carries an N-linked (GlcNAc...) asparagine glycan. Asp-149 functions as the Nucleophile in the catalytic mechanism. N-linked (GlcNAc...) asparagine glycans are attached at residues Asn-177 and Asn-192. 222–226 provides a ligand contact to substrate; it reads NWGNA. Asp-244 functions as the Proton donor in the catalytic mechanism. A glycan (N-linked (GlcNAc...) asparagine) is linked at Asn-395.

This sequence belongs to the glycosyl hydrolase 27 family.

It is found in the secreted. The enzyme catalyses Hydrolysis of terminal, non-reducing alpha-D-galactose residues in alpha-D-galactosides, including galactose oligosaccharides, galactomannans and galactolipids.. Functionally, hydrolyzes a variety of simple alpha-D-galactoside as well as more complex molecules such as oligosaccharides and polysaccharides. This chain is Probable alpha-galactosidase B (aglB), found in Emericella nidulans (strain FGSC A4 / ATCC 38163 / CBS 112.46 / NRRL 194 / M139) (Aspergillus nidulans).